A 242-amino-acid chain; its full sequence is Small ribosomal subunit protein uS2 (242 aa).

It belongs to the universal ribosomal protein uS2 family.

This is Small ribosomal subunit protein uS2 from Neisseria gonorrhoeae (strain ATCC 700825 / FA 1090).